Reading from the N-terminus, the 496-residue chain is Putative (R)-citramalate synthase CimA (496 aa).

The Pyruvate carboxyltransferase domain occupies 3-253 (VRVLDTTLRD…DTSINIEMLY (251 aa)).

This sequence belongs to the alpha-IPM synthase/homocitrate synthase family. Homodimer.

The catalysed reaction is pyruvate + acetyl-CoA + H2O = (3R)-citramalate + CoA + H(+). It participates in amino-acid biosynthesis; L-isoleucine biosynthesis; 2-oxobutanoate from pyruvate: step 1/3. In terms of biological role, catalyzes the condensation of pyruvate and acetyl-coenzyme A to form (R)-citramalate. The sequence is that of Putative (R)-citramalate synthase CimA from Methanothermobacter thermautotrophicus (strain ATCC 29096 / DSM 1053 / JCM 10044 / NBRC 100330 / Delta H) (Methanobacterium thermoautotrophicum).